The chain runs to 208 residues: FMN-dependent NADH:quinone oxidoreductase (208 aa).

Residues serine 17–serine 19, methionine 99–leucine 102, and serine 143–glycine 146 each bind FMN.

It belongs to the azoreductase type 1 family. Homodimer. It depends on FMN as a cofactor.

The enzyme catalyses 2 a quinone + NADH + H(+) = 2 a 1,4-benzosemiquinone + NAD(+). It catalyses the reaction N,N-dimethyl-1,4-phenylenediamine + anthranilate + 2 NAD(+) = 2-(4-dimethylaminophenyl)diazenylbenzoate + 2 NADH + 2 H(+). Its function is as follows. Quinone reductase that provides resistance to thiol-specific stress caused by electrophilic quinones. Functionally, also exhibits azoreductase activity. Catalyzes the reductive cleavage of the azo bond in aromatic azo compounds to the corresponding amines. The chain is FMN-dependent NADH:quinone oxidoreductase from Staphylococcus aureus (strain Mu50 / ATCC 700699).